A 477-amino-acid chain; its full sequence is UDP-sulfoquinovose synthase, chloroplastic (477 aa).

A disordered region spans residues 1–21 (MAHLLSASCPSVISLSSSSSK). The transit peptide at 1-86 (MAHLLSASCP…TNNSSSKPKR (86 aa)) directs the protein to the chloroplast. Residues 95–96 (YC), 115–119 (DNLVR), 158–159 (DI), R184, and N202 each bind NAD(+). Residue R184 participates in substrate binding. Substrate is bound by residues T228 and Y265. T228 is an active-site residue. NAD(+) contacts are provided by Y265 and K269. The active-site Proton acceptor is the Y265. The active site involves K269. Position 292 (Q292) interacts with substrate. Residue V295 participates in NAD(+) binding. Substrate contacts are provided by residues 322 to 325 (ALNR), 337 to 339 (TVY), and 410 to 412 (RVE).

The protein belongs to the NAD(P)-dependent epimerase/dehydratase family. As to quaternary structure, homodimer. The cofactor is NAD(+).

It localises to the plastid. It is found in the chloroplast. It carries out the reaction sulfite + UDP-alpha-D-glucose + H(+) = UDP-alpha-D-6-sulfoquinovose + H2O. With respect to regulation, concentrations above 100 uM sulfite inhibit the reaction. Involved in the biosynthesis of sulfolipids found in thylakoid membranes. Converts UDP-glucose and sulfite to the sulfolipid head group precursor UDP-sulfoquinovose. This Arabidopsis thaliana (Mouse-ear cress) protein is UDP-sulfoquinovose synthase, chloroplastic (SQD1).